The sequence spans 81 residues: Photosystem I iron-sulfur center (81 aa).

4Fe-4S ferredoxin-type domains are found at residues 2–31 and 39–68; these read SHSVKIYDTCIGCTQCVRACPTDVLEMIPW and IASAPRTEDCVGCKRCESACPTDFLSVRVY. Residues cysteine 11, cysteine 14, cysteine 17, cysteine 21, cysteine 48, cysteine 51, cysteine 54, and cysteine 58 each coordinate [4Fe-4S] cluster.

The eukaryotic PSI reaction center is composed of at least 11 subunits. [4Fe-4S] cluster serves as cofactor.

The protein localises to the plastid thylakoid membrane. It carries out the reaction reduced [plastocyanin] + hnu + oxidized [2Fe-2S]-[ferredoxin] = oxidized [plastocyanin] + reduced [2Fe-2S]-[ferredoxin]. Functionally, apoprotein for the two 4Fe-4S centers FA and FB of photosystem I (PSI); essential for photochemical activity. FB is the terminal electron acceptor of PSI, donating electrons to ferredoxin. The C-terminus interacts with PsaA/B/D and helps assemble the protein into the PSI complex. Required for binding of PsaD and PsaE to PSI. PSI is a plastocyanin-ferredoxin oxidoreductase, converting photonic excitation into a charge separation, which transfers an electron from the donor P700 chlorophyll pair to the spectroscopically characterized acceptors A0, A1, FX, FA and FB in turn. The sequence is that of Photosystem I iron-sulfur center from Cuscuta reflexa (Southern Asian dodder).